Consider the following 222-residue polypeptide: 7-cyano-7-deazaguanine synthase (222 aa).

11 to 21 (LSGGMDSAVLL) serves as a coordination point for ATP. Zn(2+)-binding residues include Cys192, Cys200, Cys203, and Cys206.

Belongs to the QueC family. Zn(2+) is required as a cofactor.

The enzyme catalyses 7-carboxy-7-deazaguanine + NH4(+) + ATP = 7-cyano-7-deazaguanine + ADP + phosphate + H2O + H(+). Its pathway is purine metabolism; 7-cyano-7-deazaguanine biosynthesis. Functionally, catalyzes the ATP-dependent conversion of 7-carboxy-7-deazaguanine (CDG) to 7-cyano-7-deazaguanine (preQ(0)). This Sulfurihydrogenibium sp. (strain YO3AOP1) protein is 7-cyano-7-deazaguanine synthase.